A 257-amino-acid chain; its full sequence is Melatonin receptor type 1A (257 aa).

At 5–22 (LASIVNDGWSLSSLHCQL) the chain is on the extracellular side. Cysteine 20 and cysteine 97 are oxidised to a cystine. Residues 23–43 (SGFLMGLSVIGSVFNITGIAI) form a helical membrane-spanning segment. The Cytoplasmic portion of the chain corresponds to 44–64 (NRYCCICHSLRYNKLYSSTNS). The chain crosses the membrane as a helical span at residues 65 to 85 (LCYVFLIWMLTLVAIVPNLCV). Residues 86-107 (GTLQYDPRIYSCTFTQSVSSAY) are Extracellular-facing. A helical transmembrane segment spans residues 108–128 (TIAVVVFHFIVPMLVVIFCYL). Residues 129–160 (RIWALVLQVRWRVKPDNKPKLKPQDFRNFVTM) lie on the Cytoplasmic side of the membrane. A helical transmembrane segment spans residues 161 to 181 (FVVFVLFAICWAPLNFIGLVV). At 182–194 (ASEPASMAPRIPE) the chain is on the extracellular side. Residues 195 to 215 (WLFVASYYMGYFNSCLNAIIY) form a helical membrane-spanning segment. The Cytoplasmic segment spans residues 216–257 (GLLNQNFRQEYRKIIVSLCTTKMFFVDSSNHVAHRIKRKPSP).

The protein belongs to the G-protein coupled receptor 1 family.

It localises to the cell membrane. Its function is as follows. High affinity receptor for melatonin. Likely to mediate the reproductive and circadian actions of melatonin. The activity of this receptor is mediated by pertussis toxin sensitive G proteins that inhibit adenylate cyclase activity. Possibly involved in sleep induction, by melatonin activation of the potassium channel KCNMA1/BK and the dissociation of G-beta and G-gamma subunits, thereby decreasing synaptic transmission. The polypeptide is Melatonin receptor type 1A (MTNR1A) (Bos taurus (Bovine)).